The chain runs to 364 residues: Apyrase (364 aa).

The first 35 residues, 1–35, serve as a signal peptide directing secretion; it reads MRSSYRVGNPIRFQPTNVVGLLLLSLVLSFMLVQS.

Belongs to the apyrase family. Ca(2+) serves as cofactor. As to expression, salivary gland (at protein level).

Its subcellular location is the secreted. The enzyme catalyses a ribonucleoside 5'-triphosphate + 2 H2O = a ribonucleoside 5'-phosphate + 2 phosphate + 2 H(+). Its function is as follows. Facilitates hematophagy by inhibiting ADP-dependent platelet aggregation in the host. Cleaves adenosine triphosphate (ATP) and adenosine diphosphate (ADP) to adenosine monophosphate (AMP) and inorganic phosphate in calcium-dependent manner. This is Apyrase from Cimex lectularius (Bed bug).